Reading from the N-terminus, the 374-residue chain is F-box/LRR-repeat protein 8 (374 aa).

In terms of domain architecture, F-box spans glycine 2–lysine 48.

As to quaternary structure, directly interacts with SKP1 and CUL1. Widely expressed during embryogenesis and in adult tissues.

Its function is as follows. Substrate-recognition component of the SCF (SKP1-CUL1-F-box protein)-type E3 ubiquitin ligase complex. This Mus musculus (Mouse) protein is F-box/LRR-repeat protein 8 (Fbxl8).